A 366-amino-acid chain; its full sequence is Carbamoyl phosphate synthase small chain (366 aa).

The segment at 1–171 (MLEKRYLVLE…KTPYVSTGSD (171 aa)) is CPSase. L-glutamine-binding residues include serine 47, glycine 221, and glycine 223. The 188-residue stretch at 173–360 (SVVLLDFGKK…ITMMKDFKEK (188 aa)) folds into the Glutamine amidotransferase type-1 domain. Cysteine 248 acts as the Nucleophile in catalysis. L-glutamine-binding residues include leucine 249, glutamine 252, asparagine 290, glycine 292, and tyrosine 293. Residues histidine 333 and glutamate 335 contribute to the active site.

This sequence belongs to the CarA family. In terms of assembly, composed of two chains; the small (or glutamine) chain promotes the hydrolysis of glutamine to ammonia, which is used by the large (or ammonia) chain to synthesize carbamoyl phosphate. Tetramer of heterodimers (alpha,beta)4.

It catalyses the reaction hydrogencarbonate + L-glutamine + 2 ATP + H2O = carbamoyl phosphate + L-glutamate + 2 ADP + phosphate + 2 H(+). The catalysed reaction is L-glutamine + H2O = L-glutamate + NH4(+). It functions in the pathway amino-acid biosynthesis; L-arginine biosynthesis; carbamoyl phosphate from bicarbonate: step 1/1. It participates in pyrimidine metabolism; UMP biosynthesis via de novo pathway; (S)-dihydroorotate from bicarbonate: step 1/3. Functionally, small subunit of the glutamine-dependent carbamoyl phosphate synthetase (CPSase). CPSase catalyzes the formation of carbamoyl phosphate from the ammonia moiety of glutamine, carbonate, and phosphate donated by ATP, constituting the first step of 2 biosynthetic pathways, one leading to arginine and/or urea and the other to pyrimidine nucleotides. The small subunit (glutamine amidotransferase) binds and cleaves glutamine to supply the large subunit with the substrate ammonia. The polypeptide is Carbamoyl phosphate synthase small chain (Staphylococcus epidermidis (strain ATCC 35984 / DSM 28319 / BCRC 17069 / CCUG 31568 / BM 3577 / RP62A)).